Consider the following 565-residue polypeptide: Putative serine protease pcp-1 (565 aa).

Residues 1-17 form the signal peptide; the sequence is MRWFLVLLLVALVSVEA. N-linked (GlcNAc...) asparagine glycosylation is found at asparagine 69, asparagine 107, and asparagine 126. Catalysis depends on serine 177, which acts as the Charge relay system. N-linked (GlcNAc...) asparagine glycans are attached at residues asparagine 240, asparagine 244, asparagine 257, asparagine 271, asparagine 319, and asparagine 347. Residues aspartate 451 and histidine 479 each act as charge relay system in the active site.

Belongs to the peptidase S28 family.

In Caenorhabditis elegans, this protein is Putative serine protease pcp-1 (pcp-1).